The sequence spans 425 residues: UDP-N-acetylglucosamine 1-carboxyvinyltransferase (425 aa).

Position 24–25 (lysine 24–asparagine 25) interacts with phosphoenolpyruvate. Position 95 (arginine 95) interacts with UDP-N-acetyl-alpha-D-glucosamine. Cysteine 119 (proton donor) is an active-site residue. Residue cysteine 119 is modified to 2-(S-cysteinyl)pyruvic acid O-phosphothioketal. Residues arginine 124–glutamine 128, aspartate 308, and valine 330 contribute to the UDP-N-acetyl-alpha-D-glucosamine site.

The protein belongs to the EPSP synthase family. MurA subfamily.

It is found in the cytoplasm. It catalyses the reaction phosphoenolpyruvate + UDP-N-acetyl-alpha-D-glucosamine = UDP-N-acetyl-3-O-(1-carboxyvinyl)-alpha-D-glucosamine + phosphate. It functions in the pathway cell wall biogenesis; peptidoglycan biosynthesis. Functionally, cell wall formation. Adds enolpyruvyl to UDP-N-acetylglucosamine. The sequence is that of UDP-N-acetylglucosamine 1-carboxyvinyltransferase from Deinococcus deserti (strain DSM 17065 / CIP 109153 / LMG 22923 / VCD115).